The following is an 83-amino-acid chain: Beta-toxin Ct7 (83 aa).

The N-terminal stretch at 1-18 (MKVLILIIASVLLIGVEC) is a signal peptide. The 63-residue stretch at 19–81 (KDGYPMNSEG…VWDSATNKCG (63 aa)) folds into the LCN-type CS-alpha/beta domain. Intrachain disulfides connect Cys29/Cys80, Cys33/Cys54, Cys40/Cys61, and Cys44/Cys63. Glycine amide is present on Gly81. Residue Gly82 is a propeptide.

Belongs to the long (4 C-C) scorpion toxin superfamily. Sodium channel inhibitor family. Beta subfamily. Expressed by the venom gland.

The protein localises to the secreted. Functionally, beta toxins bind voltage-independently at site-4 of sodium channels (Nav) and shift the voltage of activation toward more negative potentials thereby affecting sodium channel activation and promoting spontaneous and repetitive firing. Is possibly toxic to mice, freshwater shrimp and crickets. The sequence is that of Beta-toxin Ct7 from Centruroides tecomanus (Scorpion).